A 200-amino-acid chain; its full sequence is NAD(P)H dehydrogenase (quinone) (200 aa).

A Flavodoxin-like domain is found at 4–191; sequence VLVLYYSSYG…DIARYQGKHV (188 aa). Residues 10 to 15 and 79 to 81 contribute to the FMN site; these read SSYGHV and TRF. Tyr-12 is a binding site for NAD(+). Trp-99 is a substrate binding site. Residues 114-120 and His-135 contribute to the FMN site; that span reads STGTQHG.

This sequence belongs to the WrbA family. Requires FMN as cofactor.

The catalysed reaction is a quinone + NADH + H(+) = a quinol + NAD(+). The enzyme catalyses a quinone + NADPH + H(+) = a quinol + NADP(+). This is NAD(P)H dehydrogenase (quinone) from Burkholderia orbicola (strain MC0-3).